A 238-amino-acid polypeptide reads, in one-letter code: Purine nucleoside phosphorylase DeoD-type (238 aa).

A purine D-ribonucleoside is bound at residue histidine 4. Residues glycine 20, arginine 24, arginine 43, and 87-90 contribute to the phosphate site; that span reads RVGS. Residues 179 to 181 and 203 to 204 contribute to the a purine D-ribonucleoside site; these read EME and SD. The Proton donor role is filled by aspartate 204.

The protein belongs to the PNP/UDP phosphorylase family. Homohexamer; trimer of homodimers.

The enzyme catalyses a purine D-ribonucleoside + phosphate = a purine nucleobase + alpha-D-ribose 1-phosphate. It carries out the reaction a purine 2'-deoxy-D-ribonucleoside + phosphate = a purine nucleobase + 2-deoxy-alpha-D-ribose 1-phosphate. Catalyzes the reversible phosphorolytic breakdown of the N-glycosidic bond in the beta-(deoxy)ribonucleoside molecules, with the formation of the corresponding free purine bases and pentose-1-phosphate. The polypeptide is Purine nucleoside phosphorylase DeoD-type (Haemophilus influenzae (strain PittEE)).